Consider the following 478-residue polypeptide: ATP synthase subunit beta (478 aa).

155-162 contributes to the ATP binding site; the sequence is GGAGVGKT.

The protein belongs to the ATPase alpha/beta chains family. F-type ATPases have 2 components, CF(1) - the catalytic core - and CF(0) - the membrane proton channel. CF(1) has five subunits: alpha(3), beta(3), gamma(1), delta(1), epsilon(1). CF(0) has three main subunits: a(1), b(2) and c(9-12). The alpha and beta chains form an alternating ring which encloses part of the gamma chain. CF(1) is attached to CF(0) by a central stalk formed by the gamma and epsilon chains, while a peripheral stalk is formed by the delta and b chains.

It is found in the cell inner membrane. It catalyses the reaction ATP + H2O + 4 H(+)(in) = ADP + phosphate + 5 H(+)(out). In terms of biological role, produces ATP from ADP in the presence of a proton gradient across the membrane. The catalytic sites are hosted primarily by the beta subunits. The polypeptide is ATP synthase subunit beta (Fuscovulum blasticum (Rhodobacter blasticus)).